The primary structure comprises 212 residues: HTH-type transcriptional regulatory protein RaaS (212 aa).

In terms of domain architecture, HTH tetR-type spans 6-65 (LTAHARIREAAIEQFGRHGFGVGLRAIAEAAGVSAALVIHHFGSKEGLRKACDDFVAEEI). A DNA-binding region (H-T-H motif) is located at residues 28-47 (GLRAIAEAAGVSAALVIHHF).

As to quaternary structure, homodimer. Interacts with long chain acyl-CoA derivatives. Interacts with several drugs such rhodamine 6G, ethidium and safranin O.

Its activity is regulated as follows. Interaction with long chain acyl-CoA derivatives (oleoyl-CoA and, to lesser extent, stearoyl-CoA) prevents binding to DNA, leading to the expression of the target genes. Long chain acyl-CoA derivatives may serve as biological indicators of the bacterial metabolic state. Functionally, regulates the expression of the Rv1217c-Rv1218c multidrug efflux system and its own expression. Acts by binding to promoter regions of Rv1219c and upstream of the Rv1218c gene. Important for survival in prolonged stationary phase and during macrophage infection. May be used to eliminate non-growing mycobacteria. This is HTH-type transcriptional regulatory protein RaaS from Mycobacterium tuberculosis (strain ATCC 25618 / H37Rv).